The chain runs to 442 residues: D-inositol 3-phosphate glycosyltransferase (442 aa).

A 1D-myo-inositol 3-phosphate-binding site is contributed by His-26. UDP-N-acetyl-alpha-D-glucosamine-binding positions include 32-33 (QP) and Gly-40. Residues 37–42 (DAGGMN), Lys-95, Tyr-128, Thr-152, and Arg-172 each bind 1D-myo-inositol 3-phosphate. UDP-N-acetyl-alpha-D-glucosamine-binding residues include Arg-246, Lys-251, and Gln-304. The Mg(2+) site is built by Tyr-313, Arg-314, and Ala-316. Residues Glu-326 and Glu-334 each contribute to the UDP-N-acetyl-alpha-D-glucosamine site. A Mg(2+)-binding site is contributed by Thr-340.

This sequence belongs to the glycosyltransferase group 1 family. MshA subfamily. In terms of assembly, homodimer.

It catalyses the reaction 1D-myo-inositol 3-phosphate + UDP-N-acetyl-alpha-D-glucosamine = 1D-myo-inositol 2-acetamido-2-deoxy-alpha-D-glucopyranoside 3-phosphate + UDP + H(+). Functionally, catalyzes the transfer of a N-acetyl-glucosamine moiety to 1D-myo-inositol 3-phosphate to produce 1D-myo-inositol 2-acetamido-2-deoxy-glucopyranoside 3-phosphate in the mycothiol biosynthesis pathway. This chain is D-inositol 3-phosphate glycosyltransferase, found in Mycolicibacterium gilvum (strain PYR-GCK) (Mycobacterium gilvum (strain PYR-GCK)).